We begin with the raw amino-acid sequence, 557 residues long: Dihydroxy-acid dehydratase (557 aa).

Asp-78 contacts Mg(2+). Cys-119 lines the [2Fe-2S] cluster pocket. 2 residues coordinate Mg(2+): Asp-120 and Lys-121. Lys-121 carries the post-translational modification N6-carboxylysine. Cys-192 is a binding site for [2Fe-2S] cluster. Glu-442 is a Mg(2+) binding site. The Proton acceptor role is filled by Ser-468.

Belongs to the IlvD/Edd family. Homodimer. Requires [2Fe-2S] cluster as cofactor. The cofactor is Mg(2+).

The catalysed reaction is (2R)-2,3-dihydroxy-3-methylbutanoate = 3-methyl-2-oxobutanoate + H2O. It carries out the reaction (2R,3R)-2,3-dihydroxy-3-methylpentanoate = (S)-3-methyl-2-oxopentanoate + H2O. It functions in the pathway amino-acid biosynthesis; L-isoleucine biosynthesis; L-isoleucine from 2-oxobutanoate: step 3/4. The protein operates within amino-acid biosynthesis; L-valine biosynthesis; L-valine from pyruvate: step 3/4. Its function is as follows. Functions in the biosynthesis of branched-chain amino acids. Catalyzes the dehydration of (2R,3R)-2,3-dihydroxy-3-methylpentanoate (2,3-dihydroxy-3-methylvalerate) into 2-oxo-3-methylpentanoate (2-oxo-3-methylvalerate) and of (2R)-2,3-dihydroxy-3-methylbutanoate (2,3-dihydroxyisovalerate) into 2-oxo-3-methylbutanoate (2-oxoisovalerate), the penultimate precursor to L-isoleucine and L-valine, respectively. In Bacillus cereus (strain AH820), this protein is Dihydroxy-acid dehydratase.